A 368-amino-acid chain; its full sequence is Seven-bladed beta-propeller protein MSMEG_5308 (368 aa).

As to quaternary structure, interacts with MmpL3 and TtfA.

It localises to the cell septum. The protein localises to the cell tip. Functionally, stabilizes the MmpL3/TtfA trehalose monomycolate (TMM) transport complex under stress conditions. This Mycolicibacterium smegmatis (strain ATCC 700084 / mc(2)155) (Mycobacterium smegmatis) protein is Seven-bladed beta-propeller protein MSMEG_5308.